The sequence spans 407 residues: NADH dehydrogenase [ubiquinone] 1 alpha subcomplex subunit 10, mitochondrial (407 aa).

A mitochondrion-targeting transit peptide spans 1 to 60 (MTAVFRVGLVRLVSRATQSPNLLQAQTNALPAAFQQRCSISGKTMRGGPRVPKAAPYPYK).

The protein belongs to the complex I NDUFA10 subunit family. Complex I is composed of 45 different subunits. This a component of the hydrophobic protein fraction. Forms a complex including sicily, ND-42 and Hsp83; the complex is necessary to chaperone ND-42 in the cytoplasm before mitochondrial import; the interaction between sicily and ND-42 is direct and occurs preferably between the unprocessed forms in the cytoplasm. FAD serves as cofactor. As to expression, expressed in muscles (at protein level).

Its subcellular location is the mitochondrion matrix. It is found in the cytoplasm. In terms of biological role, accessory subunit of the mitochondrial membrane respiratory chain NADH dehydrogenase (Complex I), that is believed not to be involved in catalysis. Complex I functions in the transfer of electrons from NADH to the respiratory chain. The immediate electron acceptor for the enzyme is believed to be ubiquinone. This chain is NADH dehydrogenase [ubiquinone] 1 alpha subcomplex subunit 10, mitochondrial, found in Drosophila melanogaster (Fruit fly).